The sequence spans 264 residues: Hydroxyethylthiazole kinase (264 aa).

M41 provides a ligand contact to substrate. ATP-binding residues include K117 and S163. G190 lines the substrate pocket.

It belongs to the Thz kinase family. Requires Mg(2+) as cofactor.

The catalysed reaction is 5-(2-hydroxyethyl)-4-methylthiazole + ATP = 4-methyl-5-(2-phosphooxyethyl)-thiazole + ADP + H(+). Its pathway is cofactor biosynthesis; thiamine diphosphate biosynthesis; 4-methyl-5-(2-phosphoethyl)-thiazole from 5-(2-hydroxyethyl)-4-methylthiazole: step 1/1. Functionally, catalyzes the phosphorylation of the hydroxyl group of 4-methyl-5-beta-hydroxyethylthiazole (THZ). In Thermoanaerobacter pseudethanolicus (strain ATCC 33223 / 39E) (Clostridium thermohydrosulfuricum), this protein is Hydroxyethylthiazole kinase.